A 421-amino-acid polypeptide reads, in one-letter code: MSLKERKSINECDLKGKKVLIRVDFNVPLDDGNITNDYRIRSALPAVQKVLTEGGSCVLMSHLGRPKGVSMAEGKELGSAGGIPGFEQKATLKPVAKALSELLSRPVTFAPDCLNAADVVSKMSPGDVVLLENVRFYKEEGSKKSTEEREAMAKILSSYGDVYISDAFGTAHRDSATMTGIPKILGNGAAGYLMEKEISYFAKVLGNPPRPLVAIVGGAKVSDKIQLLDNMLQRIDYLLIGGAMAYTFLKAQGYSIGISMCEESKLEFARSLLKKAEDRKVQIILPIDHVCHTEFKAVDSPLITEDQNIPEGHMALDIGPKTIEKYVQTIGKCKSAIWNGPMGVFEMVPYSKGTFAIAKAMGRGTHEHGLMSIIGGGDSASAAELSGEAKRMSHVSTGGGASLELLEGKTLPGVTVLDDKE.

(2R)-3-phosphoglycerate is bound by residues V23, D24, F25, N26, R39, S61, H62, G64, R65, R135, H172, and R173. ADP-binding residues include G218 and A219. Residue G218 participates in CDP binding. 2 residues coordinate AMP: A219 and K220. A219 serves as a coordination point for ATP. A219 is a Mg(2+) binding site. K220 is a (2R)-3-phosphoglycerate binding site. Residue D223 coordinates CDP. D223 serves as a coordination point for Mg(2+). K224 and G242 together coordinate ADP. Residue K224 coordinates AMP. K224 serves as a coordination point for ATP. Residue G242 participates in CDP binding. AMP is bound by residues A243 and A315. Residues A243 and A315 each coordinate ATP. ADP is bound by residues A315 and N339. Residues G340 and F345 each contribute to the CDP site. Residues F345, E346, D378, and S379 each contribute to the ADP site. AMP is bound at residue E346. E346, D378, and S379 together coordinate ATP. Residue D378 participates in Mg(2+) binding.

It belongs to the phosphoglycerate kinase family. Monomer. It depends on Mg(2+) as a cofactor.

Its subcellular location is the cytoplasm. It carries out the reaction (2R)-3-phosphoglycerate + ATP = (2R)-3-phospho-glyceroyl phosphate + ADP. Its pathway is carbohydrate degradation; glycolysis; pyruvate from D-glyceraldehyde 3-phosphate: step 2/5. In Trypanosoma brucei brucei, this protein is Phosphoglycerate kinase, cytosolic.